Consider the following 89-residue polypeptide: UPF0213 protein LSEI_1587 (89 aa).

In terms of domain architecture, GIY-YIG spans 4-79; the sequence is KTYYFYVLLC…KHQTRHRKEV (76 aa).

This sequence belongs to the UPF0213 family.

The chain is UPF0213 protein LSEI_1587 from Lacticaseibacillus paracasei (strain ATCC 334 / BCRC 17002 / CCUG 31169 / CIP 107868 / KCTC 3260 / NRRL B-441) (Lactobacillus paracasei).